The chain runs to 65 residues: Large ribosomal subunit protein bL35 (65 aa).

This sequence belongs to the bacterial ribosomal protein bL35 family.

The sequence is that of Large ribosomal subunit protein bL35 from Sodalis glossinidius (strain morsitans).